A 528-amino-acid polypeptide reads, in one-letter code: Sphingosine-1-phosphate lyase (528 aa).

The helical transmembrane segment at 13–35 threads the bilayer; it reads PAKLVLATAGITAASILAYQAIT. Lys-324 carries the N6-(pyridoxal phosphate)lysine modification.

It belongs to the group II decarboxylase family. Sphingosine-1-phosphate lyase subfamily. Pyridoxal 5'-phosphate is required as a cofactor.

It is found in the endoplasmic reticulum membrane. It carries out the reaction sphinganine 1-phosphate = hexadecanal + phosphoethanolamine. The protein operates within lipid metabolism; sphingolipid metabolism. In terms of biological role, cleaves phosphorylated sphingoid bases (PSBs), such as sphingosine-1-phosphate, into fatty aldehydes and phosphoethanolamine. Sphingosine-1-phosphate (S1P) probably acts intracellularly as a second messenger perhaps by promoting cell proliferation; the absence of S1P lyase increases its concentration. This leads to increased lateral pseudopod formation as well as defects in the efficiency of chemotaxis. Overexpression of S1P lyase causes decreased growth rates, entry into stationary phase at lower cell density and increased sensitivity to the antitumor agents cisplatin and carboplatin; these effects are more pronounced in cells that express more enzyme. This chain is Sphingosine-1-phosphate lyase (sglA), found in Dictyostelium discoideum (Social amoeba).